The sequence spans 1061 residues: NACHT, LRR and PYD domains-containing protein 12 (1061 aa).

The Pyrin domain maps to 1–95; the sequence is MLRTAGRDGL…WERGQREDLV (95 aa). Residues 129–201 form the FISNA domain; sequence YRDYVRRKFR…SPIKIETLFE (73 aa). Residues 211 to 528 form the NACHT domain; the sequence is RTVVMQGAAG…EFFAAMYYIL (318 aa). 217–224 lines the ATP pocket; sequence GAAGIGKS. 8 LRR repeats span residues 828-848, 857-878, 885-906, 914-935, 942-962, 971-992, 999-1020, and 1028-1049; these read HLVE…RLLC, RLRT…ELAS, SLRE…LLCE, KLQT…GLSV, NLRE…WLLA, RLQK…NLYF, TLTD…LLCK, and KLRV…RLAA.

This sequence belongs to the NLRP family. Interacts (via pyrin domain) with ASC. Interacts (via pyrin domain) with FAF1 (via UBA domain). Interacts with MAP3K14; this interaction promotes proteasomal degradation of MAP3K14. Interacts with NOD2; this interaction promotes degradation of NOD2 through the ubiquitin-proteasome pathway. Interacts with HSPA1A and HSPA8. Interacts with HSP90AA1. Interacts with TRIM25; this interaction inhibits RIGI-mediated signaling pathway. As to expression, detected only in peripheral blood leukocytes, predominantly in eosinophils and granulocytes, and at lower levels in monocytes.

The protein resides in the cytoplasm. In terms of biological role, plays an essential role as an potent mitigator of inflammation. Primarily expressed in dendritic cells and macrophages, inhibits both canonical and non-canonical NF-kappa-B and ERK activation pathways. Functions as a negative regulator of NOD2 by targeting it to degradation via the proteasome pathway. In turn, promotes bacterial tolerance. Also inhibits the RIGI-mediated immune signaling against RNA viruses by reducing the E3 ubiquitin ligase TRIM25-mediated 'Lys-63'-linked RIGI activation but enhancing the E3 ubiquitin ligase RNF125-mediated 'Lys-48'-linked RIGI degradation. Also acts as a negative regulator of inflammatory response to mitigate obesity and obesity-associated diseases in adipose tissue. This chain is NACHT, LRR and PYD domains-containing protein 12 (NLRP12), found in Homo sapiens (Human).